The primary structure comprises 887 residues: DNA mismatch repair protein MutS (887 aa).

Residue 621–628 coordinates ATP; that stretch reads GPNMGGKS. The disordered stretch occupies residues 828-853; sequence AEPEPNKPAAAAKTKPASPQPDLFAS. A compositionally biased stretch (low complexity) spans 834 to 848; it reads KPAAAAKTKPASPQP.

This sequence belongs to the DNA mismatch repair MutS family.

In terms of biological role, this protein is involved in the repair of mismatches in DNA. It is possible that it carries out the mismatch recognition step. This protein has a weak ATPase activity. This chain is DNA mismatch repair protein MutS, found in Saccharophagus degradans (strain 2-40 / ATCC 43961 / DSM 17024).